The primary structure comprises 490 residues: ATP synthase subunit beta (490 aa).

Position 175–182 (175–182 (GGAGVGKT)) interacts with ATP.

This sequence belongs to the ATPase alpha/beta chains family. As to quaternary structure, F-type ATPases have 2 components, CF(1) - the catalytic core - and CF(0) - the membrane proton channel. CF(1) has five subunits: alpha(3), beta(3), gamma(1), delta(1), epsilon(1). CF(0) has three main subunits: a(1), b(2) and c(9-12). The alpha and beta chains form an alternating ring which encloses part of the gamma chain. CF(1) is attached to CF(0) by a central stalk formed by the gamma and epsilon chains, while a peripheral stalk is formed by the delta and b chains.

It is found in the cell membrane. The enzyme catalyses ATP + H2O + 4 H(+)(in) = ADP + phosphate + 5 H(+)(out). Functionally, produces ATP from ADP in the presence of a proton gradient across the membrane. The catalytic sites are hosted primarily by the beta subunits. This Acidothermus cellulolyticus (strain ATCC 43068 / DSM 8971 / 11B) protein is ATP synthase subunit beta.